A 618-amino-acid polypeptide reads, in one-letter code: Prothrombin (618 aa).

The signal sequence occupies residues 1 to 24 (MSHVRGLGLPGCLALAALVSLVHS). Residues 25-43 (QHVFLAPQQALSLLQRVRR) constitute a propeptide that is removed on maturation. The Gla domain maps to 44–90 (ANSGFLEELRKGNLERECVEEQCSYEEAFEALESPQDTDVFWAKYTV). Glu50, Glu51, Glu58, Glu60, Glu63, Glu64, Glu69, Glu70, Glu73, and Glu76 each carry 4-carboxyglutamate. The cysteines at positions 61 and 66 are disulfide-linked. 10 cysteine pairs are disulfide-bonded: Cys91-Cys104, Cys109-Cys187, Cys130-Cys170, Cys158-Cys182, Cys215-Cys293, Cys236-Cys276, Cys264-Cys288, Cys333-Cys479, Cys388-Cys404, and Cys533-Cys547. 2 Kringle domains span residues 109–187 (CAMD…VPVC) and 215–292 (CLTE…NLNY). 2 N-linked (GlcNAc...) asparagine glycosylation sites follow: Asn122 and Asn144. The Peptidase S1 domain occupies 361 to 615 (IVEGWDAEKG…LKRWIQKVID (255 aa)). His403 functions as the Charge relay system in the catalytic mechanism. N-linked (GlcNAc...) asparagine glycosylation occurs at Asn413. Asp459 serves as the catalytic Charge relay system. Positions 548-570 (AGFKVNDTKRGDACEGDSGGPFV) are high affinity receptor-binding region which is also known as the TP508 peptide. Asn553 carries an N-linked (GlcNAc...) asparagine glycan. An intrachain disulfide couples Cys561 to Cys591. Ser565 (charge relay system) is an active-site residue.

It belongs to the peptidase S1 family. Heterodimer (named alpha-thrombin) of a light and a heavy chain; disulfide-linked. Forms a heterodimer with SERPINA5. In plasma, interacts (via N-terminus) with alpha-1-microglobulin; this interaction does not prevent the activation of prothrombin to thrombin. The gamma-carboxyglutamyl residues, which bind calcium ions, result from the carboxylation of glutamyl residues by a microsomal enzyme, the vitamin K-dependent carboxylase. The modified residues are necessary for the calcium-dependent interaction with a negatively charged phospholipid surface, which is essential for the conversion of prothrombin to thrombin. Post-translationally, in the penultimate step of the coagulation cascade, prothrombin is converted to thrombin by the prothrombinase complex composed of factor Xa (F10), cofactor Va (F5), and phospholipids. This activation requires factor Xa-catalyzed sequential cleavage at 2 sites, Arg-311 and Arg-360, along 2 possible pathways. In the first pathway, the first cleavage occurs at Arg-311, leading to the formation of the inactive intermediate prethrombin-2. This pathway preferentially occurs on platelets and in the absence of cofactor Va. In the second pathway, the first cleavage occurs at Arg-360, which separates protease domain into 2 chains that remain connected through a disulfide bond and generates the active intermediate meizothrombin. The presence of cofactor Va directs activation along the meizothrombin pathway and greatly accelerates the rate of cleavage at Arg-360, but has a smaller effect on the cleavage of meizothrombin at Arg-311. Meizothrombin accumulates as an intermediate when prothrombinase is assembled on the membrane of red blood cells.

The catalysed reaction is Selective cleavage of Arg-|-Gly bonds in fibrinogen to form fibrin and release fibrinopeptides A and B.. Its activity is regulated as follows. Activity is promoted in the presence of negatively charged surfaces, such as polyphosphate and dextran sulfate. Inhibited by SERPINA5. Thrombin, which cleaves bonds after Arg and Lys, converts fibrinogen to fibrin and activates factors V, VII, VIII, XIII, and, in complex with thrombomodulin, protein C. Functions in blood homeostasis, inflammation and wound healing. Activates coagulation factor XI (F11); activation is promoted by the contact with negatively charged surfaces. Triggers the production of pro-inflammatory cytokines, such as MCP-1/CCL2 and IL8/CXCL8, in endothelial cells. This is Prothrombin (F2) from Mus musculus (Mouse).